We begin with the raw amino-acid sequence, 239 residues long: MAGHSKWANIQHRKGRQDEKRGKIWTKLIKEITVAAKMGGGDLTANPRLRLAIDKAKDANMPNDNVQRAIQRGTGSLEGVNYEEIRYEGYGMNGAAIIVDCLTDNRTRTVAEVRHAFNKNGGNMGTEGSVAFLFKHCGQMLFAPGTSEDQLMEVALDAGAEDVITHDDGSLEVLTPVPDFSKVQDAISQAGLKAELATVAMRPETEIALEGDQAESMQKLLDALENLDDVQEVFTNAAL.

Residues 1-21 are disordered; the sequence is MAGHSKWANIQHRKGRQDEKR.

It belongs to the TACO1 family.

The protein resides in the cytoplasm. The protein is Probable transcriptional regulatory protein Pnuc_0618 of Polynucleobacter asymbioticus (strain DSM 18221 / CIP 109841 / QLW-P1DMWA-1) (Polynucleobacter necessarius subsp. asymbioticus).